Reading from the N-terminus, the 425-residue chain is Serine--tRNA ligase (425 aa).

233 to 235 contacts L-serine; sequence TAE. 264–266 contacts ATP; sequence RRE. Position 287 (glutamate 287) interacts with L-serine. 351–354 is an ATP binding site; it reads EISS. Serine 385 serves as a coordination point for L-serine.

This sequence belongs to the class-II aminoacyl-tRNA synthetase family. Type-1 seryl-tRNA synthetase subfamily. As to quaternary structure, homodimer. The tRNA molecule binds across the dimer.

Its subcellular location is the cytoplasm. It carries out the reaction tRNA(Ser) + L-serine + ATP = L-seryl-tRNA(Ser) + AMP + diphosphate + H(+). It catalyses the reaction tRNA(Sec) + L-serine + ATP = L-seryl-tRNA(Sec) + AMP + diphosphate + H(+). It participates in aminoacyl-tRNA biosynthesis; selenocysteinyl-tRNA(Sec) biosynthesis; L-seryl-tRNA(Sec) from L-serine and tRNA(Sec): step 1/1. Its function is as follows. Catalyzes the attachment of serine to tRNA(Ser). Is also able to aminoacylate tRNA(Sec) with serine, to form the misacylated tRNA L-seryl-tRNA(Sec), which will be further converted into selenocysteinyl-tRNA(Sec). The chain is Serine--tRNA ligase from Prochlorococcus marinus (strain SARG / CCMP1375 / SS120).